A 74-amino-acid chain; its full sequence is Mucroporin (74 aa).

The signal sequence occupies residues 1-22 (MKVKFLLAVFLIVLVVTDHCHA). Position 39 is a lysine amide (Lys39). The propeptide occupies 45 to 74 (QMEARFEPQNRNYRKRELDLEKLFANMPDY).

This sequence belongs to the non-disulfide-bridged peptide (NDBP) superfamily. Short antimicrobial peptide (group 4) family. Expressed by the venom gland.

The protein localises to the secreted. It is found in the target cell membrane. Its function is as follows. Mucroporin: cationic host defense peptide that have antibacterial activity by breaking membranes. Is more effective on Gram-positive than on Gram-negative bacteria. Minimum inhibitory concentrations (MIC) are the following: MIC=&gt;100 ug/ml against E.coli AB94012, MIC=&gt;100 ug/ml against P.aeruginosa AB93066, MIC=25 ug/ml against B.thuringiensis AB92037, MIC=50 ug/ml against B.subtilis AB91021, MIC=25 ug/ml against S.aureus AB94004, and MIC=25 ug/ml against the methicillin-resistant coagulase-negative Staphylococcus. Its synthetic analog mucroporin-M1 is more effective. Does not show antiviral activity against any of measles, SARS-CoV, influenza H5N1, hepatitis B and HIV-1 viruses. Mutant mucroporin-M1: can inhibit Gram-positive bacteria at low concentrations and antibiotic-resistant pathogens. Minimum inhibitory concentrations (MIC) are the following: MIC=12.5 ug/ml against E.coli AB94012, MIC=100 ug/ml against P.aeruginosa AB93066, MIC=25 ug/ml against B.thuringiensis AB92037, MIC=25 ug/ml against B.subtilis AB91021, MIC=5 ug/ml against S.aureus AB94004, and MIC=5 ug/ml against the methicillin-resistant coagulase-negative Staphylococcus. Also shows antiviral activities against measles (EC(50) of 7.15 ug/ml), SARS-CoV (EC(50) of 14.46 ug/ml), influenza H5N1 viruses (EC(50) of 2.10 mug/ml), HIV-1, and hepatitis B virus. This Lychas mucronatus (Chinese swimming scorpion) protein is Mucroporin.